We begin with the raw amino-acid sequence, 921 residues long: Leucine--tRNA ligase (921 aa).

The short motif at Pro-41–His-52 is the 'HIGH' region element. The 'KMSKS' region signature appears at Lys-695–Ser-699. Lys-698 lines the ATP pocket.

This sequence belongs to the class-I aminoacyl-tRNA synthetase family.

The protein localises to the cytoplasm. The catalysed reaction is tRNA(Leu) + L-leucine + ATP = L-leucyl-tRNA(Leu) + AMP + diphosphate. In Cytophaga hutchinsonii (strain ATCC 33406 / DSM 1761 / CIP 103989 / NBRC 15051 / NCIMB 9469 / D465), this protein is Leucine--tRNA ligase.